A 295-amino-acid polypeptide reads, in one-letter code: Phosphatidylglycerol--prolipoprotein diacylglyceryl transferase (295 aa).

The next 4 membrane-spanning stretches (helical) occupy residues 28-48 (WYAL…VLAT), 69-89 (LLTW…VLFY), 101-121 (ILMV…VVIA), and 131-151 (IPKL…LLLG). An a 1,2-diacyl-sn-glycero-3-phospho-(1'-sn-glycerol)-binding site is contributed by arginine 152. The next 3 membrane-spanning stretches (helical) occupy residues 195-215 (QLYE…WLVW), 224-244 (GLIT…VEFF), and 268-288 (GLTM…WFVL).

It belongs to the Lgt family.

Its subcellular location is the cell inner membrane. It carries out the reaction L-cysteinyl-[prolipoprotein] + a 1,2-diacyl-sn-glycero-3-phospho-(1'-sn-glycerol) = an S-1,2-diacyl-sn-glyceryl-L-cysteinyl-[prolipoprotein] + sn-glycerol 1-phosphate + H(+). Its pathway is protein modification; lipoprotein biosynthesis (diacylglyceryl transfer). Its function is as follows. Catalyzes the transfer of the diacylglyceryl group from phosphatidylglycerol to the sulfhydryl group of the N-terminal cysteine of a prolipoprotein, the first step in the formation of mature lipoproteins. This chain is Phosphatidylglycerol--prolipoprotein diacylglyceryl transferase, found in Ruegeria pomeroyi (strain ATCC 700808 / DSM 15171 / DSS-3) (Silicibacter pomeroyi).